Reading from the N-terminus, the 1313-residue chain is Kinesin-like protein KIN-12B (1313 aa).

Residues 1–74 (MKHFMMPRNA…PPRPPSSNPL (74 aa)) are disordered. Polar residues predominate over residues 17-26 (ESQSPNPSLT). Positions 96-431 (GVKVIVRMKP…LRFAQRAKAI (336 aa)) constitute a Kinesin motor domain. 170 to 177 (GQTGSGKT) contributes to the ATP binding site. Microtubules-binding regions lie at residues 298 to 302 (SSRSH), 331 to 337 (VDLAGSE), and 380 to 384 (HIPYR). Residues 429 to 467 (KAIQNKAIVNEVMQDDVNFLREVIRQLRDELQRVKDDKG) form a neck region. The interval 685 to 709 (ESASPKIRNSRKSLRTTSMSTASQK) is disordered. Residues 699-708 (RTTSMSTASQ) show a composition bias toward polar residues. 3 coiled-coil regions span residues 932-1003 (LDEE…YTDS), 1062-1130 (AEEL…RIRE), and 1167-1241 (EKEV…TEIS).

This sequence belongs to the TRAFAC class myosin-kinesin ATPase superfamily. Kinesin family. KIN-12 subfamily. In terms of assembly, homodimer and heterodimer with KIN12A. Interacts with TIO.

The protein localises to the cytoplasm. The protein resides in the cytoskeleton. Its subcellular location is the phragmoplast. Its function is as follows. Plus-end directed kinesin-like motor enzyme that plays a critical role in the organization of phragmoplast microtubules during cytokinesis. Constitutes a signaling module in association with serine/threonine-protein kinase TIO that is required to support phragmoplast expansion and cell-plate growth in plant cells. The sequence is that of Kinesin-like protein KIN-12B from Arabidopsis thaliana (Mouse-ear cress).